The sequence spans 629 residues: Ras GTPase-activating protein gap-1 (629 aa).

In terms of domain architecture, Ras-GAP spans 183 to 398 (DRIRPVLSSL…SVMASFLDNI (216 aa)). The region spanning 411–507 (TVFKFGNLQQ…WLNAIERQRN (97 aa)) is the PH domain.

The protein localises to the cytoplasm. Functionally, GTPase-activating protein, which inhibits the vulval induction by acting as a negative regulator for the member of the Ras family let-60. Probably decreases the signaling activity of Ras by stimulating its intrinsic GTPase activity, thereby lowering the levels of GTP-bound, active Ras. The sequence is that of Ras GTPase-activating protein gap-1 (gap-1) from Caenorhabditis elegans.